A 621-amino-acid chain; its full sequence is MSNQEYTFQTEINQLLDLMIHSLYSNKEIFLRELVSNASDALDKLNYLMLTDEKLKGLNTTPSIHLSFDSQKKTLTIKDNGIGMDKNDLIEHLGTIAKSGTKNFLSALSGDKKKDSALIGQFGVGFYSAFMVASKIVVQTKKVNSDQAYAWVSDGKGKFEISECVKDEQGTEITLFLKDEDSHFASRWEIDSVVKKYSEHIPFPIFLTYTDTKHEGEGDNQKEIKEEKCEQINQASALWKMNKSELKDKDYKEFYQSFAHDNSEPLSYIHNKVEGSLEYTTLFYIPSTAPFDMFRVDYKSGVKLYVKRVFITDDDKELLPSYLRFVKGVIDSEDLPLNVSREILQQNKILANIRSASVKKILSEIERLSKDEKNYHKFYEPFGKVLKEGLYGDFENKEKLLELLRFYSKDKEKLISLKEYKENLKENQKSIYYLLGENLDLLKASPLLEKYAQKGYDVLLLSDEIDAFVMPGVNEYDKTPFKDASHSESLKELGLEEIHDEVKDQFKDLMKAFEENLKDEIKGVELSSHLTSAVALIGDEQNAMMANWMRQMGQSVPESKKTLELNPNHAILQKLLKCEDKEQLSAFIWLLYDGAKLLEKGALKDAKSFNERLNSVLLKAL.

The segment at 1-341 is a; substrate-binding; the sequence is MSNQEYTFQT…SEDLPLNVSR (341 aa). The b stretch occupies residues 342 to 547; the sequence is EILQQNKILA…GDEQNAMMAN (206 aa). Positions 548–621 are c; sequence WMRQMGQSVP…RLNSVLLKAL (74 aa).

Belongs to the heat shock protein 90 family. As to quaternary structure, homodimer.

The protein resides in the cytoplasm. Functionally, molecular chaperone. Has ATPase activity. In Helicobacter pylori (strain ATCC 700392 / 26695) (Campylobacter pylori), this protein is Chaperone protein HtpG.